We begin with the raw amino-acid sequence, 430 residues long: Gamma-glutamyl phosphate reductase (430 aa).

This sequence belongs to the gamma-glutamyl phosphate reductase family.

It is found in the cytoplasm. It carries out the reaction L-glutamate 5-semialdehyde + phosphate + NADP(+) = L-glutamyl 5-phosphate + NADPH + H(+). The protein operates within amino-acid biosynthesis; L-proline biosynthesis; L-glutamate 5-semialdehyde from L-glutamate: step 2/2. Functionally, catalyzes the NADPH-dependent reduction of L-glutamate 5-phosphate into L-glutamate 5-semialdehyde and phosphate. The product spontaneously undergoes cyclization to form 1-pyrroline-5-carboxylate. This chain is Gamma-glutamyl phosphate reductase, found in Psychrobacter arcticus (strain DSM 17307 / VKM B-2377 / 273-4).